The chain runs to 99 residues: DNA-binding protein Fis (99 aa).

Positions Gln75–Lys94 form a DNA-binding region, H-T-H motif.

The protein belongs to the transcriptional regulatory Fis family. In terms of assembly, homodimer.

Functionally, activates ribosomal RNA transcription. Plays a direct role in upstream activation of rRNA promoters. The protein is DNA-binding protein Fis of Haemophilus influenzae (strain PittEE).